Consider the following 181-residue polypeptide: UPF0340 protein OB2986 (181 aa).

Belongs to the UPF0340 family.

The protein is UPF0340 protein OB2986 of Oceanobacillus iheyensis (strain DSM 14371 / CIP 107618 / JCM 11309 / KCTC 3954 / HTE831).